Reading from the N-terminus, the 538-residue chain is Carboxypeptidase 2 (538 aa).

The N-terminal stretch at 1–21 is a signal peptide; that stretch reads MVAYRFLTLISLGLGSHCASA. N46 carries an N-linked (GlcNAc...) asparagine glycan. Residues 53–76 form a disordered region; it reads PAFTSPGTVPRGFSDGTSGPTRDE. The region spanning 71–351 is the Peptidase M14 domain; it reads GPTRDETMEG…VMVKSILQTA (281 aa). Residues H136, E139, and H224 each contribute to the Zn(2+) site. The Proton donor/acceptor role is filled by E322. N393 and N459 each carry an N-linked (GlcNAc...) asparagine glycan.

The protein belongs to the peptidase M14 family. Zn(2+) serves as cofactor.

It is found in the secreted. Extracellular metalloprotease that contributes to pathogenicity. This chain is Carboxypeptidase 2 (MCPB), found in Trichophyton tonsurans (Scalp ringworm fungus).